The chain runs to 196 residues: Calcium channel flower (196 aa).

A run of 3 helical transmembrane segments spans residues 35 to 55 (LGIV…LSII), 70 to 92 (LAGF…QVGS), and 113 to 133 (AVPP…GLIF).

It belongs to the calcium channel flower family. In terms of assembly, homomultimer. Associates with the dally/ magu complex.

It localises to the cell membrane. The protein localises to the cytoplasmic vesicle. The protein resides in the secretory vesicle. Its subcellular location is the synaptic vesicle membrane. It is found in the presynaptic cell membrane. It localises to the endosome. Its activity is regulated as follows. Channel activity is inhibited by La(3+), which reduces Ca(2+) influx and thus inhibits it's function in promoting activity-dependent bulk endocytosis (ADBE) in response to high stimuli. Its function is as follows. Transmembrane protein which mediates synaptic endocytosis, fitness-based cell culling, neuronal culling, morphogen gradient scaling, and calcium transport. Regulates synaptic endocytosis and hence couples exo- with endocytosis. Controls two major modes of synaptic vesicle (SV) endocytosis in the synaptic boutons of neuromuscular junctions (NMJs); Ca(2+) channel-independent Clathrin-mediated endocytosis (CME) in response to mild stimulation, and Ca(2+) channel-dependent activity-dependent bulk endocytosis (ADBE) in response to strong stimulation. Functions in ADBE and subsequent SV reformation from bulk endosomes by initiating Ca(2+) channel-dependent phosphatidylinositol 4,5-bisphosphate (PtdIns(4,5)P2) compartmentalization in synaptic boutons. There it acts at the periactive zone to provide the low Ca(2+) levels required to initiate Calcineurin activation and upregulate PtdIns(4,5)P2. Conversely PtdIns(4,5)P2 enhances fwe Ca(2+) channel-activity, establishing a positive feedback loop that induces PtdIns(4,5)P2 microdomain at the periactive zone. These microdomains trigger bulk membrane invagination (i.e. ADBE) by triggering actin polymerization while also promoting localization of fwe to bulk endosomes, thereby removing the ADBE trigger to reduce endocytosis and prevent excess membrane uptake. PtdIns(4,5)P2 then promotes SV reformation from the bulk endosomes, to coordinate ADBE and subsequent SV reformation. Different combinations of the flower isoforms at the cell membrane are also required for the identification and elimination of suboptimal or supernumerary cells during development, regeneration, and adulthood. Required for the recognition and elimination of unfit cells in the developing wing during cell competition. In the developing pupal retina, mediates the elimination of unwanted postmitotic neurons, including supernumerary photoreceptor neurons that form at the periphery of the retina and are contained within incomplete ommatidia units. Also required for efficient elimination and replacement of old neurons by newly generated neurons during regeneration in the adult brain following mechanical injury. Downstream of the flower fitness fingerprints, cells identified as unwanted or unfit are eliminated via apoptosis through the expression of ahuizotl (azot). However, the cells marked for elimination by the flower isoforms only undergo apoptosis if additional thresholds are met; (1) their neighboring fit/healthy cells express different levels of the fwe isoforms, and (2) the levels of the protective signal SPARC expressed by the loser or unwanted cells are unable to inhibit caspase activation. These additional thresholds for flower-mediated apoptosis, allows useful cells to recover from transient and limited stress before they are unnecessarily eliminated. Functions with dally and magu in a mechanism of scaling, which utilises apoptosis to ensure that the dpp morphogen gradient, which mediates organ growth, remains proportional to the size of the growing wing. In this mechanism, fwe represses dally- and Magu-dependent activity in expanding the gradient, and dally/Magu inhibits fwe-dependent apoptosis to keep cell death rate low. When the levels of these different proteins are optimally regulated the gradient correctly scales with organ growth but when this fails, fwe-mediated apoptosis is activated to trim the developing tissue to match the correct size of the gradient. The polypeptide is Calcium channel flower (Drosophila grimshawi (Hawaiian fruit fly)).